A 192-amino-acid chain; its full sequence is Glycerol-3-phosphate acyltransferase (192 aa).

Transmembrane regions (helical) follow at residues 1 to 21, 49 to 69, 80 to 100, 110 to 130, and 143 to 163; these read MFIA…AYIL, GLAG…IYSL, ELCI…WLKF, IGVI…SWLF, and IVSI…VVAL.

It belongs to the PlsY family. Probably interacts with PlsX.

Its subcellular location is the cell inner membrane. It catalyses the reaction an acyl phosphate + sn-glycerol 3-phosphate = a 1-acyl-sn-glycero-3-phosphate + phosphate. It functions in the pathway lipid metabolism; phospholipid metabolism. Its function is as follows. Catalyzes the transfer of an acyl group from acyl-phosphate (acyl-PO(4)) to glycerol-3-phosphate (G3P) to form lysophosphatidic acid (LPA). This enzyme utilizes acyl-phosphate as fatty acyl donor, but not acyl-CoA or acyl-ACP. This chain is Glycerol-3-phosphate acyltransferase, found in Anaplasma phagocytophilum (strain HZ).